A 636-amino-acid chain; its full sequence is Threonine--tRNA ligase (636 aa).

The TGS domain maps to 1–60 (MPIINFNNKEILFNYPISIIEIIKKFDKNLSENCIAAKINGKLLDVSEIINYDGSLELVK). Positions 242 to 533 (DHRKIGKKLD…ITEEFSGKYP (292 aa)) are catalytic. Residues Cys-333, His-384, and His-510 each contribute to the Zn(2+) site.

Belongs to the class-II aminoacyl-tRNA synthetase family. In terms of assembly, homodimer. Zn(2+) is required as a cofactor.

Its subcellular location is the cytoplasm. It carries out the reaction tRNA(Thr) + L-threonine + ATP = L-threonyl-tRNA(Thr) + AMP + diphosphate + H(+). Functionally, catalyzes the attachment of threonine to tRNA(Thr) in a two-step reaction: L-threonine is first activated by ATP to form Thr-AMP and then transferred to the acceptor end of tRNA(Thr). Also edits incorrectly charged L-seryl-tRNA(Thr). The polypeptide is Threonine--tRNA ligase (Wigglesworthia glossinidia brevipalpis).